A 587-amino-acid polypeptide reads, in one-letter code: 5-aminolevulinate synthase, erythroid-specific, mitochondrial (587 aa).

A mitochondrion-targeting transit peptide spans 1-49; the sequence is MVTAAMLLQCCPVLARGPTSLLGKVVKTHQFLFGIGRCPILATQGPNCS. Arg163 contacts succinyl-CoA. Pyridoxal 5'-phosphate contacts are provided by Cys258 and Phe259. Positions 280 and 299 each coordinate succinyl-CoA. Residues Ser332, His360, and Thr388 each coordinate pyridoxal 5'-phosphate. Residue Lys391 is part of the active site. Lys391 carries the post-translational modification N6-(pyridoxal phosphate)lysine. Pyridoxal 5'-phosphate-binding residues include Thr420 and Thr421. Thr508 is a binding site for succinyl-CoA.

The protein belongs to the class-II pyridoxal-phosphate-dependent aminotransferase family. In terms of assembly, homodimer. Interacts with SUCLA2. As to quaternary structure, interacts with SUCLA2. Pyridoxal 5'-phosphate is required as a cofactor. Erythroid-specific.

The protein localises to the mitochondrion inner membrane. The enzyme catalyses succinyl-CoA + glycine + H(+) = 5-aminolevulinate + CO2 + CoA. Its pathway is porphyrin-containing compound metabolism; protoporphyrin-IX biosynthesis; 5-aminolevulinate from glycine: step 1/1. With respect to regulation, down-regulated by itaconyl-CoA which acts as a competitive inhibitor of succinyl-CoA substrate. In terms of biological role, catalyzes the pyridoxal 5'-phosphate (PLP)-dependent condensation of succinyl-CoA and glycine to form aminolevulinic acid (ALA), with CoA and CO2 as by-products. Contributes significantly to heme formation during erythropoiesis. Catalyzes the pyridoxal 5'-phosphate (PLP)-dependent condensation of succinyl-CoA and glycine to form aminolevulinic acid (ALA), with CoA and CO2 as by-products. Catalytic activity is 75-85% of isoform 1 activity. Functionally, catalyzes the pyridoxal 5'-phosphate (PLP)-dependent condensation of succinyl-CoA and glycine to form aminolevulinic acid (ALA), with CoA and CO2 as by-products. Catalytic activity is 65-75% of isoform 1 activity. The chain is 5-aminolevulinate synthase, erythroid-specific, mitochondrial from Homo sapiens (Human).